The following is a 374-amino-acid chain: Phosphate-binding protein PstS 1 (374 aa).

A signal peptide spans 1–23 (MKIRLHTLLAVLTAAPLLLAAAG). The N-palmitoyl cysteine moiety is linked to residue Cys-24. Cys-24 carries S-diacylglycerol cysteine lipidation. The interval 25–48 (GSKPPSGSPETGAGAGTVATTPAS) is disordered. Residues 58–60 (STL), Ser-88, Asp-106, and 189–191 (SGD) contribute to the phosphate site.

Belongs to the PstS family. The complex is composed of two ATP-binding proteins (PstB), two transmembrane proteins (PstC and PstA) and a solute-binding protein (PstS).

Its subcellular location is the cell membrane. Functionally, part of the ABC transporter complex PstSACB involved in phosphate import. The sequence is that of Phosphate-binding protein PstS 1 (pstS1) from Mycobacterium tuberculosis (strain CDC 1551 / Oshkosh).